A 352-amino-acid chain; its full sequence is CRISPR-associated endonuclease Cas1 1 (352 aa).

The Mn(2+) site is built by glutamate 207, histidine 274, and glutamate 289.

It belongs to the CRISPR-associated endonuclease Cas1 family. As to quaternary structure, homodimer, forms a heterotetramer with a Cas2 homodimer. It depends on Mg(2+) as a cofactor. Mn(2+) is required as a cofactor.

CRISPR (clustered regularly interspaced short palindromic repeat), is an adaptive immune system that provides protection against mobile genetic elements (viruses, transposable elements and conjugative plasmids). CRISPR clusters contain spacers, sequences complementary to antecedent mobile elements, and target invading nucleic acids. CRISPR clusters are transcribed and processed into CRISPR RNA (crRNA). Acts as a dsDNA endonuclease. Involved in the integration of spacer DNA into the CRISPR cassette. This is CRISPR-associated endonuclease Cas1 1 from Saccharolobus solfataricus (strain ATCC 35092 / DSM 1617 / JCM 11322 / P2) (Sulfolobus solfataricus).